The chain runs to 428 residues: MVEASLRVSGSTNPISGRIVANGAKNSALPIMAACLLLNGSVVLAGMPDLRDVTVMSELITSLGGRISFLRNTKEKANHKVEINCDNLHNWAIPHEITSQMRASCLTLGPILTRMGRAEVALPGGCSIGSRPLDMHIWALQKLGAKVEVCGNYVKCSSSGKLVGCHIDFQSVSVGATENALMAAVMAHGTTTISNAAIEPEVADLAHFLVKAGAQISGIGTRTLQICGVQQLSGPSHTIIRDRMEAGTYALAAISTGGSVHIAGVTSEMLGCLAHELEGMGGKVTDVPDGLVVLRHSPQINPVVLHTAPYPGFPSDMQAQFAATACLARGTSQIHEHVFDRRFSYARELAKMGADIHVQGNTASIRGVDKLHGASVQAPDLRASAALLIAGLSAQGVTTISNVQTLYRGYEAMEEKLRACGAEVELVR.

Residue K25–N26 participates in phosphoenolpyruvate binding. A UDP-N-acetyl-alpha-D-glucosamine-binding site is contributed by R102. C126 (proton donor) is an active-site residue. Position 126 is a 2-(S-cysteinyl)pyruvic acid O-phosphothioketal (C126). UDP-N-acetyl-alpha-D-glucosamine contacts are provided by D316 and V338.

Belongs to the EPSP synthase family. MurA subfamily.

It is found in the cytoplasm. It catalyses the reaction phosphoenolpyruvate + UDP-N-acetyl-alpha-D-glucosamine = UDP-N-acetyl-3-O-(1-carboxyvinyl)-alpha-D-glucosamine + phosphate. It functions in the pathway cell wall biogenesis; peptidoglycan biosynthesis. Its function is as follows. Cell wall formation. Adds enolpyruvyl to UDP-N-acetylglucosamine. This is UDP-N-acetylglucosamine 1-carboxyvinyltransferase from Anaplasma marginale (strain Florida).